A 1894-amino-acid chain; its full sequence is Plexin-A2 (1894 aa).

Residues 1-34 (MEQRRFYLRAMQADNLSVVLLSVAWLLLARGTTG) form the signal peptide. 2 N-linked (GlcNAc...) asparagine glycosylation sites follow: asparagine 15 and asparagine 76. The 474-residue stretch at 35–508 (MPQYSTFHSE…SERQVTRVPV (474 aa)) folds into the Sema domain. Residues 35 to 1237 (MPQYSTFHSE…VISDSLLTLP (1203 aa)) lie on the Extracellular side of the membrane. 2 disulfide bridges follow: cysteine 94-cysteine 103 and cysteine 129-cysteine 137. N-linked (GlcNAc...) asparagine glycosylation is found at asparagine 163 and asparagine 327. 8 disulfides stabilise this stretch: cysteine 284-cysteine 405, cysteine 300-cysteine 356, cysteine 374-cysteine 393, cysteine 511-cysteine 528, cysteine 517-cysteine 559, cysteine 520-cysteine 537, cysteine 531-cysteine 543, and cysteine 594-cysteine 613. Residues asparagine 598, asparagine 696, and asparagine 756 are each glycosylated (N-linked (GlcNAc...) asparagine). 4 consecutive IPT/TIG domains span residues 858-951 (PQIT…QYTF), 954-1037 (PSVL…QFEY), 1041-1139 (PRVQ…KFIY), and 1143-1228 (PTFE…SVSV). N-linked (GlcNAc...) asparagine glycans are attached at residues asparagine 1180 and asparagine 1205. Residues 1238-1258 (AIISIAAGGSLLLIIVIIVLI) form a helical membrane-spanning segment. Residues 1259-1894 (AYKRKSREND…HLINAMSIES (636 aa)) lie on the Cytoplasmic side of the membrane. A coiled-coil region spans residues 1261 to 1310 (KRKSRENDLTLKRLQMQMDNLESRVALECKEAFAELQTDINELTSDLDRS). Residue serine 1612 is modified to Phosphoserine.

The protein belongs to the plexin family. Homodimer. Interacts with RND1. Interacts directly with NRP1 and NRP2. The PLXNA2 homodimer interacts with a SEMA6A homodimer, giving rise to a heterotetramer.

The protein localises to the cell membrane. In terms of biological role, coreceptor for SEMA3A and SEMA6A. Necessary for signaling by SEMA6A and class 3 semaphorins and subsequent remodeling of the cytoskeleton. Plays a role in axon guidance, invasive growth and cell migration. Class 3 semaphorins bind to a complex composed of a neuropilin and a plexin. The plexin modulates the affinity of the complex for specific semaphorins, and its cytoplasmic domain is required for the activation of down-stream signaling events in the cytoplasm. In Mus musculus (Mouse), this protein is Plexin-A2 (Plxna2).